A 185-amino-acid chain; its full sequence is Biogenesis of lysosome-related organelles complex 1 subunit 5 (185 aa).

The segment covering 1–16 has biased composition (polar residues); that stretch reads MSSSNSPVKSTGSPFI. Positions 1-24 are disordered; that stretch reads MSSSNSPVKSTGSPFIQSLKPRDN. A coiled-coil region spans residues 98–182; that stretch reads MQDQLASVLK…VTMEKELSKQ (85 aa).

This sequence belongs to the BLOC1S5 family. As to quaternary structure, component of the biogenesis of lysosome-related organelles complex 1 (BLOC-1).

In terms of biological role, component of the BLOC-1 complex, a complex that is required for normal biogenesis of lysosome-related organelles (LRO), such as platelet dense granules and melanosomes. Plays a role in intracellular vesicle trafficking. In Xenopus tropicalis (Western clawed frog), this protein is Biogenesis of lysosome-related organelles complex 1 subunit 5 (bloc1s5).